Consider the following 553-residue polypeptide: Non-SCF-type F-box protein ROY1 (553 aa).

Residues 3–49 (FQDQDIFIVFSHASLFLNQNDLLSLSLTSKKMHDMIAIPRLYSNIHI) enclose the F-box domain.

As to quaternary structure, interacts with SKP1 and YPT32; SKP1 is required for the interaction with YPT32.

The protein resides in the cytoplasm. It localises to the nucleus. The protein localises to the cytoplasmic vesicle membrane. Its function is as follows. Non-SCF-type F-box protein involved in the endocytic with the vacuolar sorting pathway. Acts as a repressor of YPT52 by inhibiting the formation of active, GTP-bound, YPT52. Involved in the defense mechanism against methylmercury toxicity. In Saccharomyces cerevisiae (strain ATCC 204508 / S288c) (Baker's yeast), this protein is Non-SCF-type F-box protein ROY1 (ROY1).